The following is a 273-amino-acid chain: MAPKKAVAAPEGGNKENAAVKGSSKVKVKRKSIKLVKTQSHPPTLSMVVEVLKKNTERKGTSVQAIRTRILSAHPTVDPLRLKFLLRTALNKGLEKGILIRPLNSSATGATGRFKLAKPVKTTKAGKENVASENVDPNAEQETQKKAPKKEKKAKTEKEPKGEKTKAVAKKAKEDSDEKPKVAKSKKDKEAKEVDKANKEAKEVDKANKEAKEVDKAPAKKPKAKTEAAKAEGGGKAKKEPPKAKAKDVKAQKDSTDEGAPVKAGKKGKKVTN.

A disordered region spans residues 1–24 (MAPKKAVAAPEGGNKENAAVKGSS). In terms of domain architecture, H15 spans 40–118 (SHPPTLSMVV…GATGRFKLAK (79 aa)). Residues 120–273 (VKTTKAGKEN…AGKKGKKVTN (154 aa)) are disordered. The segment covering 154–256 (AKTEKEPKGE…KDVKAQKDST (103 aa)) has biased composition (basic and acidic residues). A run of 3 repeats spans residues 189–198 (KEAKEVDKAN), 199–208 (KEAKEVDKAN), and 209–217 (KEAKEVDKA). Positions 189–217 (KEAKEVDKANKEAKEVDKANKEAKEVDKA) are 3 X 10 AA tandem repeats. Positions 264–273 (AGKKGKKVTN) are enriched in basic residues.

Belongs to the histone H1/H5 family. In terms of assembly, interacts with nap1l1.

The protein localises to the nucleus. It is found in the chromosome. The protein is Protein B4 (b4) of Xenopus laevis (African clawed frog).